Reading from the N-terminus, the 134-residue chain is Crustacean hyperglycemic hormones isoform A (134 aa).

Residues 1 to 24 form the signal peptide; sequence MMACRTLCLVVVMVASLGTSGVGG. Residue Gln-61 is modified to Pyrrolidone carboxylic acid. Residue Phe-63 is modified to D-phenylalanine; in form CHH-A-II. 3 disulfide bridges follow: Cys-67–Cys-103, Cys-83–Cys-99, and Cys-86–Cys-112. Val-132 is subject to Valine amide.

This sequence belongs to the arthropod CHH/MIH/GIH/VIH hormone family. Post-translationally, stereoinversion of L-Phe (form CHH-A-I) to D-Phe (form CHH-A-II). As to expression, produced by the medulla terminalis X-organ in the eyestalks and transported to the sinus gland where they are stored and released. Present also in the ventral nervous system.

Its subcellular location is the secreted. Its function is as follows. CHH is the most abundant hormone in the sinus gland of isopods and decapods which controls the blood sugar level. Has a secretagogue action over the amylase released from the midgut gland. May act as a stress hormone. In terms of biological role, MIH may inhibit Y-organs where molting hormone (ecdysteroid) is secreted and a molting cycle is initiated when MIH secretion diminishes or stops. The polypeptide is Crustacean hyperglycemic hormones isoform A (Homarus americanus (American lobster)).